We begin with the raw amino-acid sequence, 133 residues long: ATP synthase epsilon chain (133 aa).

It belongs to the ATPase epsilon chain family. In terms of assembly, F-type ATPases have 2 components, CF(1) - the catalytic core - and CF(0) - the membrane proton channel. CF(1) has five subunits: alpha(3), beta(3), gamma(1), delta(1), epsilon(1). CF(0) has three main subunits: a, b and c.

It localises to the cell membrane. Its function is as follows. Produces ATP from ADP in the presence of a proton gradient across the membrane. This chain is ATP synthase epsilon chain, found in Clostridium perfringens (strain SM101 / Type A).